The primary structure comprises 219 residues: MNPEFWQARWKEKRIGFNQPKVNPLLIKYFSDLKMATGSRIFIPLCGKSIDMIWLANQGFDMVGVELVESAVQEFFAENNISYTIKAHDKNSNIKCYQGQLSGQTIALWVADIFMLRTNDVGRVDAVYDRAALIAMPAELRPQYSQQVIDLSQNAHQLLLTLNYDQNERAGPPFSISHEQIQQYYSAHYQIQELEGKPSTLNAAPEMTVTENVWLLNKP.

Residues tryptophan 10, leucine 45, glutamate 66, and arginine 130 each contribute to the S-adenosyl-L-methionine site.

Belongs to the class I-like SAM-binding methyltransferase superfamily. TPMT family.

Its subcellular location is the cytoplasm. It carries out the reaction S-adenosyl-L-methionine + a thiopurine = S-adenosyl-L-homocysteine + a thiopurine S-methylether.. This Psychrobacter cryohalolentis (strain ATCC BAA-1226 / DSM 17306 / VKM B-2378 / K5) protein is Thiopurine S-methyltransferase.